Consider the following 397-residue polypeptide: MSLSKTKNPALLAGPGDEAKEKVQAALELLHKFGSAFKVDTAGFSFHPESPECDKIFGAYLKNVKHVPTYSSAKTLTSVGGRILYAATCQYVKLTPVTNLTGCTLWEHGWGQNLKCYHGEGMCRKKNEIEMAATSESGVAALKEGRGAVEINRWGRQVVKITQENYVICMEDLQSRFNQPSANSCGLSFSDSDKARSAMENATELTRSIFSQAKMDHLLFMPICCYCNYGGKMILGRQLCKLTPFSISGTEGLREEDVSPVQAVSVRHPAVFVFQCCNATGGSKGKTSCDFKISHADLLQVLNLVRKMWLEVMGYPMPIHFPRFKWSPSLRVKNALLPEGSVNEDENPFGLDNSEDEEEVVPPSPPSPARKRTRTTVAEVHHKKKKKIVLESSEEDE.

2 residues coordinate Zn(2+): cysteine 116 and histidine 118. Positions 129–161 (IEMAATSESGVAALKEGRGAVEINRWGRQVVKI) are flexible loop. The Zn(2+) site is built by cysteine 169, cysteine 185, cysteine 225, cysteine 227, cysteine 276, and cysteine 289. The C-terminal arm, DBP binding stretch occupies residues 335–397 (ALLPEGSVNE…IVLESSEEDE (63 aa)). Residues 338 to 397 (PEGSVNEDENPFGLDNSEDEEEVVPPSPPSPARKRTRTTVAEVHHKKKKKIVLESSEEDE) are disordered. The span at 342–360 (VNEDENPFGLDNSEDEEEV) shows a compositional bias: acidic residues.

The protein belongs to the adenoviridae E2A DNA-binding protein family. In terms of assembly, homomultimerizes on viral ssDNA bound to pTP. Forms a initiation complex with viral polymerase, pTP and hosts NFIA and POU2F1/OCT1. Interacts with host SRCAP.

The protein resides in the host nucleus. In terms of biological role, plays a role in the elongation phase of viral strand displacement replication by unwinding the template in an ATP-independent fashion, employing its capacity to form multimers. Also enhances the rate of initiation. Released from template upon second strand synthesis. Assembles in complex with viral pTP, viral pol, host NFIA and host POU2F1/OCT1 on viral origin of replication. Covers the whole ssDNA genome during synthesis. The complementary strand synthesis induces its relese from DNA template. May inhibit cellular transcription mediated by the interaction between host SRCAP and CBP. In Snake adenovirus serotype 1 (SnAdV-1), this protein is DNA-binding protein.